Here is a 122-residue protein sequence, read N- to C-terminus: Histone H2B.2 (122 aa).

Residues 1–10 are compositionally biased toward low complexity; it reads MAPKKAPAAT. Positions 1–28 are disordered; the sequence is MAPKKAPAATTEKKVKKAPTTEKKNKKK. N,N,N-trimethylalanine is present on alanine 2. 2 positions are modified to N6-acetyllysine: lysine 5 and lysine 42. Residue lysine 116 forms a Glycyl lysine isopeptide (Lys-Gly) (interchain with G-Cter in ubiquitin) linkage.

It belongs to the histone H2B family. As to quaternary structure, the nucleosome is a histone octamer containing two molecules each of H2A, H2B, H3 and H4 assembled in one H3-H4 heterotetramer and two H2A-H2B heterodimers. The octamer wraps approximately 147 bp of DNA. Post-translationally, acetylation occurs almost exclusively in the MAC. Monoubiquitination to form H2BK115ub1 gives a specific tag for epigenetic transcriptional activation and is also prerequisite for H3K4me and H3K79me formation.

The protein localises to the nucleus. It localises to the chromosome. Core component of nucleosome. Nucleosomes wrap and compact DNA into chromatin, limiting DNA accessibility to the cellular machineries which require DNA as a template. Histones thereby play a central role in transcription regulation, DNA repair, DNA replication and chromosomal stability. DNA accessibility is regulated via a complex set of post-translational modifications of histones, also called histone code, and nucleosome remodeling. This chain is Histone H2B.2 (HTB2), found in Tetrahymena thermophila (strain SB210).